We begin with the raw amino-acid sequence, 1342 residues long: DNA-directed RNA polymerase subunit beta (1342 aa).

This sequence belongs to the RNA polymerase beta chain family. As to quaternary structure, the RNAP catalytic core consists of 2 alpha, 1 beta, 1 beta' and 1 omega subunit. When a sigma factor is associated with the core the holoenzyme is formed, which can initiate transcription.

It catalyses the reaction RNA(n) + a ribonucleoside 5'-triphosphate = RNA(n+1) + diphosphate. Its function is as follows. DNA-dependent RNA polymerase catalyzes the transcription of DNA into RNA using the four ribonucleoside triphosphates as substrates. This is DNA-directed RNA polymerase subunit beta from Aeromonas hydrophila subsp. hydrophila (strain ATCC 7966 / DSM 30187 / BCRC 13018 / CCUG 14551 / JCM 1027 / KCTC 2358 / NCIMB 9240 / NCTC 8049).